The following is a 198-amino-acid chain: dITP/XTP pyrophosphatase (198 aa).

8-13 (TKNKGK) serves as a coordination point for substrate. The active-site Proton acceptor is the Asp69. A Mg(2+)-binding site is contributed by Asp69. Substrate contacts are provided by residues Ser70, 152 to 155 (FGYD), Lys175, and 180 to 181 (HR).

This sequence belongs to the HAM1 NTPase family. Homodimer. It depends on Mg(2+) as a cofactor.

The enzyme catalyses XTP + H2O = XMP + diphosphate + H(+). It catalyses the reaction dITP + H2O = dIMP + diphosphate + H(+). The catalysed reaction is ITP + H2O = IMP + diphosphate + H(+). Its function is as follows. Pyrophosphatase that catalyzes the hydrolysis of nucleoside triphosphates to their monophosphate derivatives, with a high preference for the non-canonical purine nucleotides XTP (xanthosine triphosphate), dITP (deoxyinosine triphosphate) and ITP. Seems to function as a house-cleaning enzyme that removes non-canonical purine nucleotides from the nucleotide pool, thus preventing their incorporation into DNA/RNA and avoiding chromosomal lesions. This is dITP/XTP pyrophosphatase from Shouchella clausii (strain KSM-K16) (Alkalihalobacillus clausii).